The sequence spans 449 residues: Elongation factor 1-alpha (449 aa).

Residues 5–230 (KVHMNLVVVG…DMLEPPVRPS (226 aa)) enclose the tr-type G domain. Residues 14–21 (GHVDAGKS) are G1. 14 to 21 (GHVDAGKS) lines the GTP pocket. The G2 stretch occupies residues 70-74 (GITID). The tract at residues 91–94 (DAPG) is G3. Residues 91–95 (DAPGH) and 153–156 (NKMD) contribute to the GTP site. The G4 stretch occupies residues 153–156 (NKMD). Residues 194–196 (SGW) are G5. Position 362 is a 5-glutamyl glycerylphosphorylethanolamine (E362).

It belongs to the TRAFAC class translation factor GTPase superfamily. Classic translation factor GTPase family. EF-Tu/EF-1A subfamily. Post-translationally, phosphatidylethanolamine (PE) is a direct precursor of the ethanolamine-phosphoglycerol (EPG) moiety.

The protein localises to the cytoplasm. In terms of biological role, this protein promotes the GTP-dependent binding of aminoacyl-tRNA to the A-site of ribosomes during protein biosynthesis. This Trypanosoma brucei brucei protein is Elongation factor 1-alpha (TEF1).